The primary structure comprises 763 residues: Phosphoglycerol transferase I (763 aa).

A run of 4 helical transmembrane segments spans residues 1 to 21 (MSELLSFALFLASVLIYAWKA), 26 to 46 (WWFAATLTVLGLFVVLNITLF), 77 to 97 (ILPGIGIVLGLTAVFGALGWI), and 108 to 128 (FGYSLLALLLALGSVDASPAF).

Belongs to the OpgB family.

It localises to the cell inner membrane. It catalyses the reaction a phosphatidylglycerol + a membrane-derived-oligosaccharide D-glucose = a 1,2-diacyl-sn-glycerol + a membrane-derived-oligosaccharide 6-(glycerophospho)-D-glucose.. It functions in the pathway glycan metabolism; osmoregulated periplasmic glucan (OPG) biosynthesis. Its function is as follows. Transfers a phosphoglycerol residue from phosphatidylglycerol to the membrane-bound nascent glucan backbones. In Escherichia coli (strain SMS-3-5 / SECEC), this protein is Phosphoglycerol transferase I.